Consider the following 151-residue polypeptide: UPF0208 membrane protein YfbV (151 aa).

Residues 1–45 (MSTPDNRSVNFFSLFRRGQHYAKTWPMEKRLAPVFVENRVIRMTR) lie on the Cytoplasmic side of the membrane. A helical membrane pass occupies residues 46–65 (YAIRFMPPVAVFTLCWQIAL). At 66–68 (GGQ) the chain is on the periplasmic side. The helical transmembrane segment at 69 to 91 (LGPAVATALFALSLPMQGLWWLG) threads the bilayer. The Cytoplasmic segment spans residues 92 to 151 (KRSLTPLPPSILNWFYEVRGKLQEAGQALAPVEGKPDYQALADTLKRAFKQLDKTFLDDL).

It belongs to the UPF0208 family.

It localises to the cell inner membrane. In Salmonella typhi, this protein is UPF0208 membrane protein YfbV (yfbV).